Consider the following 346-residue polypeptide: Putative agmatine deiminase (346 aa).

Residue Cys338 is the Amidino-cysteine intermediate of the active site.

Belongs to the agmatine deiminase family.

It carries out the reaction agmatine + H2O = N-carbamoylputrescine + NH4(+). The sequence is that of Putative agmatine deiminase from Streptomyces avermitilis (strain ATCC 31267 / DSM 46492 / JCM 5070 / NBRC 14893 / NCIMB 12804 / NRRL 8165 / MA-4680).